The sequence spans 96 residues: Glutamyl-tRNA(Gln) amidotransferase subunit C (96 aa).

It belongs to the GatC family. As to quaternary structure, heterotrimer of A, B and C subunits.

The enzyme catalyses L-glutamyl-tRNA(Gln) + L-glutamine + ATP + H2O = L-glutaminyl-tRNA(Gln) + L-glutamate + ADP + phosphate + H(+). It carries out the reaction L-aspartyl-tRNA(Asn) + L-glutamine + ATP + H2O = L-asparaginyl-tRNA(Asn) + L-glutamate + ADP + phosphate + 2 H(+). Functionally, allows the formation of correctly charged Asn-tRNA(Asn) or Gln-tRNA(Gln) through the transamidation of misacylated Asp-tRNA(Asn) or Glu-tRNA(Gln) in organisms which lack either or both of asparaginyl-tRNA or glutaminyl-tRNA synthetases. The reaction takes place in the presence of glutamine and ATP through an activated phospho-Asp-tRNA(Asn) or phospho-Glu-tRNA(Gln). The protein is Glutamyl-tRNA(Gln) amidotransferase subunit C of Deinococcus radiodurans (strain ATCC 13939 / DSM 20539 / JCM 16871 / CCUG 27074 / LMG 4051 / NBRC 15346 / NCIMB 9279 / VKM B-1422 / R1).